We begin with the raw amino-acid sequence, 541 residues long: Alpha-zingiberene synthase (541 aa).

Residues Asp-296, Asp-300, Asp-437, Thr-441, and Glu-445 each contribute to the Mg(2+) site. Positions 296–300 match the DDXXD motif motif; it reads DDIYD.

It belongs to the terpene synthase family. Mg(2+) serves as cofactor. The cofactor is Mn(2+).

It carries out the reaction (2E,6E)-farnesyl diphosphate = alpha-zingiberene + diphosphate. The protein operates within secondary metabolite biosynthesis; terpenoid biosynthesis. Functionally, sesquiterpene synthase that catalyzes the formation of alpha-zingiberene and other sesquiterpenes from trans,trans-farnesyl diphosphate (FPP). May have an additional monoterpene synthase activity. In Ocimum basilicum (Sweet basil), this protein is Alpha-zingiberene synthase (ZIS).